The chain runs to 158 residues: Large ribosomal subunit protein mL50 (158 aa).

This sequence belongs to the mitochondrion-specific ribosomal protein mL50 family. Component of the mitochondrial ribosome large subunit (39S) which comprises a 16S rRNA and about 50 distinct proteins.

Its subcellular location is the mitochondrion. The protein is Large ribosomal subunit protein mL50 (MRPL50) of Pongo abelii (Sumatran orangutan).